Consider the following 271-residue polypeptide: Putative hydro-lyase blr2921 (271 aa).

The protein belongs to the D-glutamate cyclase family.

The protein is Putative hydro-lyase blr2921 of Bradyrhizobium diazoefficiens (strain JCM 10833 / BCRC 13528 / IAM 13628 / NBRC 14792 / USDA 110).